Consider the following 400-residue polypeptide: Aspartate/prephenate aminotransferase (400 aa).

L-aspartate-binding residues include Gly-39, Trp-125, and Asn-175. Lys-239 is subject to N6-(pyridoxal phosphate)lysine. Residue Arg-375 coordinates L-aspartate.

It belongs to the class-I pyridoxal-phosphate-dependent aminotransferase family. Homodimer. The cofactor is pyridoxal 5'-phosphate.

The protein resides in the cytoplasm. The catalysed reaction is L-aspartate + 2-oxoglutarate = oxaloacetate + L-glutamate. The enzyme catalyses L-arogenate + 2-oxoglutarate = prephenate + L-glutamate. Its function is as follows. Catalyzes the reversible conversion of aspartate and 2-oxoglutarate to glutamate and oxaloacetate. Can also transaminate prephenate in the presence of glutamate. Required for symbiotic nitrogen fixation. The chain is Aspartate/prephenate aminotransferase from Rhizobium meliloti (strain 1021) (Ensifer meliloti).